Here is a 1050-residue protein sequence, read N- to C-terminus: Self-sufficient cytochrome P450 monooxygenase CYP505E5 (1050 aa).

Cys-405 contacts heme. The tract at residues 461–495 (TATGLSRRSMLVARDGSSEESSNHPAEARGDHAPA) is disordered. In terms of domain architecture, Flavodoxin-like spans 500-641 (VSFFYGSNSG…DLEAWEETSL (142 aa)). FMN is bound by residues 506 to 510 (SNSGT) and 585 to 617 (VFGC…TRLA). One can recognise an FAD-binding FR-type domain in the interval 679-907 (KGLIEAKVTA…RPAKETFHLP (229 aa)).

This sequence in the N-terminal section; belongs to the cytochrome P450 family. FAD serves as cofactor. The cofactor is FMN. Requires heme as cofactor.

It catalyses the reaction 2 oxidized [cytochrome P450] + NADPH = 2 reduced [cytochrome P450] + NADP(+) + H(+). It carries out the reaction an organic molecule + reduced [NADPH--hemoprotein reductase] + O2 = an alcohol + oxidized [NADPH--hemoprotein reductase] + H2O + H(+). The enzyme catalyses dodecanoate + reduced [NADPH--hemoprotein reductase] + O2 = 5-hydroxydodecanoate + oxidized [NADPH--hemoprotein reductase] + H2O + H(+). The catalysed reaction is tetradecanoate + reduced [NADPH--hemoprotein reductase] + O2 = 7-hydroxytetradecanoate + oxidized [NADPH--hemoprotein reductase] + H2O + H(+). It catalyses the reaction dodecan-1-ol + reduced [NADPH--hemoprotein reductase] + O2 = 1,5-dodecanediol + oxidized [NADPH--hemoprotein reductase] + H2O + H(+). It carries out the reaction dodecan-1-ol + reduced [NADPH--hemoprotein reductase] + O2 = 1,4-dodecanediol + oxidized [NADPH--hemoprotein reductase] + H2O + H(+). The enzyme catalyses dodecan-1-ol + reduced [NADPH--hemoprotein reductase] + O2 = 1,6-dodecanediol + oxidized [NADPH--hemoprotein reductase] + H2O + H(+). Self-sufficient cytochrome P450 monooxygenase that catalyzes the regioselective in-chain hydroxylation of alkanes, fatty alcohols, and fatty acids at the omega-7 position. Performs hydroxylation of C10-C16 n-alkanes and C12 and C14 fatty alcohols; and thereby enables the one step biocatalytic synthesis of rare alcohols such as 5-dodecanol and 7-tetradecanol. Converts 1-dodecanol into 1,5-dodecanediol as major product with very little sub-terminally hydroxylated products with the 1,4-dodecanediol and 1,6-dodecanediol more abundant. Converts dodecanoic acid to 5-hydroxydodecanoic acid which can be further converted into delta-dodecalactone by lactonization of the 5-hydroxy acid at low pH. Also gives sub-terminal hydroxylation of dodecanoic acid with 9-hydroxydodecanoic acid being the second most abundant product. This Aspergillus kawachii (strain NBRC 4308) (White koji mold) protein is Self-sufficient cytochrome P450 monooxygenase CYP505E5.